The sequence spans 204 residues: Large ribosomal subunit protein uL4 (204 aa).

The disordered stretch occupies residues 48–75 (HTKGRSDVSGGGKKPWRQKGRGGARAGS).

This sequence belongs to the universal ribosomal protein uL4 family. In terms of assembly, part of the 50S ribosomal subunit.

Its function is as follows. One of the primary rRNA binding proteins, this protein initially binds near the 5'-end of the 23S rRNA. It is important during the early stages of 50S assembly. It makes multiple contacts with different domains of the 23S rRNA in the assembled 50S subunit and ribosome. Functionally, forms part of the polypeptide exit tunnel. The protein is Large ribosomal subunit protein uL4 of Campylobacter fetus subsp. fetus (strain 82-40).